Reading from the N-terminus, the 77-residue chain is Translation initiation factor IF-1, chloroplastic (77 aa).

Residues 1-71 (MKEQKLIHEG…TRGRIIYRLR (71 aa)) form the S1-like domain.

It belongs to the IF-1 family. As to quaternary structure, component of the 30S ribosomal translation pre-initiation complex which assembles on the 30S ribosome in the order IF-2 and IF-3, IF-1 and N-formylmethionyl-tRNA(fMet); mRNA recruitment can occur at any time during PIC assembly.

The protein resides in the plastid. It is found in the chloroplast. In terms of biological role, one of the essential components for the initiation of protein synthesis. Stabilizes the binding of IF-2 and IF-3 on the 30S subunit to which N-formylmethionyl-tRNA(fMet) subsequently binds. Helps modulate mRNA selection, yielding the 30S pre-initiation complex (PIC). Upon addition of the 50S ribosomal subunit IF-1, IF-2 and IF-3 are released leaving the mature 70S translation initiation complex. The chain is Translation initiation factor IF-1, chloroplastic from Asarum canadense (Wild ginger).